The sequence spans 204 residues: Holliday junction branch migration complex subunit RuvA (204 aa).

The domain I stretch occupies residues 1-64 (MIAQLKGSLA…EDAFLLYGFH (64 aa)). Residues 65–143 (SESQRKVFNL…ALPMAAPTTA (79 aa)) are domain II. The segment at 144-154 (IGAATMAANPA) is flexible linker. A domain III region spans residues 154-204 (AGLREEVASALLNLGYKPPQVDAALAKLFSAGEITDISVALKGALKLLAPA).

The protein belongs to the RuvA family. In terms of assembly, homotetramer. Forms an RuvA(8)-RuvB(12)-Holliday junction (HJ) complex. HJ DNA is sandwiched between 2 RuvA tetramers; dsDNA enters through RuvA and exits via RuvB. An RuvB hexamer assembles on each DNA strand where it exits the tetramer. Each RuvB hexamer is contacted by two RuvA subunits (via domain III) on 2 adjacent RuvB subunits; this complex drives branch migration. In the full resolvosome a probable DNA-RuvA(4)-RuvB(12)-RuvC(2) complex forms which resolves the HJ.

The protein localises to the cytoplasm. Functionally, the RuvA-RuvB-RuvC complex processes Holliday junction (HJ) DNA during genetic recombination and DNA repair, while the RuvA-RuvB complex plays an important role in the rescue of blocked DNA replication forks via replication fork reversal (RFR). RuvA specifically binds to HJ cruciform DNA, conferring on it an open structure. The RuvB hexamer acts as an ATP-dependent pump, pulling dsDNA into and through the RuvAB complex. HJ branch migration allows RuvC to scan DNA until it finds its consensus sequence, where it cleaves and resolves the cruciform DNA. The sequence is that of Holliday junction branch migration complex subunit RuvA from Magnetococcus marinus (strain ATCC BAA-1437 / JCM 17883 / MC-1).